Consider the following 390-residue polypeptide: GTPase Obg (390 aa).

The region spanning 1–159 is the Obg domain; it reads MKFIDEALIR…RDLQLELMLL (159 aa). The OBG-type G domain maps to 160-333; the sequence is ADVGMLGLPN…LCRDIMDFIE (174 aa). Residues 166-173, 191-195, 213-216, 283-286, and 314-316 each bind GTP; these read GLPNAGKS, FTTLV, DIPG, NKID, and SAV. Residues S173 and T193 each coordinate Mg(2+). A disordered region spans residues 363–390; it reads DHQFEDEDEDWDDWSEEDEEGVETIYKP. The segment covering 366–384 has biased composition (acidic residues); sequence FEDEDEDWDDWSEEDEEGV.

The protein belongs to the TRAFAC class OBG-HflX-like GTPase superfamily. OBG GTPase family. Monomer. Mg(2+) is required as a cofactor.

It is found in the cytoplasm. Its function is as follows. An essential GTPase which binds GTP, GDP and possibly (p)ppGpp with moderate affinity, with high nucleotide exchange rates and a fairly low GTP hydrolysis rate. Plays a role in control of the cell cycle, stress response, ribosome biogenesis and in those bacteria that undergo differentiation, in morphogenesis control. In Pasteurella multocida (strain Pm70), this protein is GTPase Obg.